The sequence spans 312 residues: Putative clathrin assembly protein At2g01920 (312 aa).

Residues 21–152 (LITATDEKFT…ILYYNKNMIR (132 aa)) enclose the ENTH domain.

The protein resides in the membrane. The protein localises to the clathrin-coated pit. It is found in the golgi apparatus. Its subcellular location is the cytoplasmic vesicle. It localises to the clathrin-coated vesicle. This is Putative clathrin assembly protein At2g01920 from Arabidopsis thaliana (Mouse-ear cress).